The chain runs to 472 residues: tRNA-2-methylthio-N(6)-dimethylallyladenosine synthase (472 aa).

Positions 1–24 (MTGTPDVFPPATPGGAPLVALPAG) are disordered. The MTTase N-terminal domain occupies 33 to 150 (GKLYIKTHGC…LPELIRARRE (118 aa)). The [4Fe-4S] cluster site is built by cysteine 42, cysteine 79, cysteine 113, cysteine 187, cysteine 191, and cysteine 194. The 235-residue stretch at 173 to 407 (RAEGASAFVS…RINAHAAGIS (235 aa)) folds into the Radical SAM core domain. The TRAM domain occupies 408–471 (EKMVGTVQTV…TNSLRARVVA (64 aa)).

The protein belongs to the methylthiotransferase family. MiaB subfamily. In terms of assembly, monomer. [4Fe-4S] cluster is required as a cofactor.

Its subcellular location is the cytoplasm. The enzyme catalyses N(6)-dimethylallyladenosine(37) in tRNA + (sulfur carrier)-SH + AH2 + 2 S-adenosyl-L-methionine = 2-methylsulfanyl-N(6)-dimethylallyladenosine(37) in tRNA + (sulfur carrier)-H + 5'-deoxyadenosine + L-methionine + A + S-adenosyl-L-homocysteine + 2 H(+). Its function is as follows. Catalyzes the methylthiolation of N6-(dimethylallyl)adenosine (i(6)A), leading to the formation of 2-methylthio-N6-(dimethylallyl)adenosine (ms(2)i(6)A) at position 37 in tRNAs that read codons beginning with uridine. The polypeptide is tRNA-2-methylthio-N(6)-dimethylallyladenosine synthase (Stenotrophomonas maltophilia (strain K279a)).